The chain runs to 510 residues: UDP-N-acetylmuramyl-tripeptide synthetase (510 aa).

Ser-36 serves as a coordination point for UDP-N-acetyl-alpha-D-muramoyl-L-alanyl-D-glutamate. Residue 113–119 participates in ATP binding; it reads GTKGKTT. Residues 159 to 160, Ser-186, and Arg-194 contribute to the UDP-N-acetyl-alpha-D-muramoyl-L-alanyl-D-glutamate site; that span reads TT. Residue Lys-228 is modified to N6-carboxylysine.

This sequence belongs to the MurCDEF family. MurE subfamily. In terms of processing, carboxylation is probably crucial for Mg(2+) binding and, consequently, for the gamma-phosphate positioning of ATP.

It is found in the cytoplasm. The protein operates within cell wall biogenesis; peptidoglycan biosynthesis. Its function is as follows. Catalyzes the addition of an amino acid to the nucleotide precursor UDP-N-acetylmuramoyl-L-alanyl-D-glutamate (UMAG) in the biosynthesis of bacterial cell-wall peptidoglycan. The protein is UDP-N-acetylmuramyl-tripeptide synthetase of Ligilactobacillus salivarius (strain UCC118) (Lactobacillus salivarius).